The chain runs to 285 residues: MLNNFERVQILSDALPFVQRFHGRTLVVKYGGSAMKNVYLKSKIIEDILFLSYIGIKVVIVHGGGPMINHWLKQVNIQPKFFNGIRVTDKDTMELVEMVLVGKVNKDLVTLLNRSSNLAVGLSGKDANLVVASSFFPDQKDNYTGKVQQVNIEIVNLLLSSGYIPVVASVASDLNGQAYNINADSVAGAIAECLNAEKLILLTDTPGIMSDINDPSSLIKYLNISQLEELKSQKIILGGMIPKVDCCIKALQGNVSSAHIIDGSVEHALLLEILTSAGIGSMLVL.

Residues 64-65 (GG), Arg-86, and Asn-180 each bind substrate.

The protein belongs to the acetylglutamate kinase family. ArgB subfamily.

Its subcellular location is the plastid. The protein localises to the chloroplast. It catalyses the reaction N-acetyl-L-glutamate + ATP = N-acetyl-L-glutamyl 5-phosphate + ADP. The protein operates within amino-acid biosynthesis; L-arginine biosynthesis; N(2)-acetyl-L-ornithine from L-glutamate: step 2/4. Functionally, catalyzes the ATP-dependent phosphorylation of N-acetyl-L-glutamate. The protein is Acetylglutamate kinase of Gracilaria tenuistipitata var. liui (Red alga).